The chain runs to 499 residues: MFSRRNLLALGLAATVSAGPCDIYEAGDTPCVAAHSTTRALYSSFSGALYQLQRGSDDTTTTISPLTAGGIADASAQDTFCANTTCLITIIYDQSGNGNHLTQAPPGGFDGPDTDGYDNLASAIGAPVTLNGQKAYGVFMSPGTGYRNNEATGTATGDEAEGMYAVLDGTHYNDACCFDYGNAETSSTDTGAGHMEAIYLGNSTTWGYGAGDGPWIMVDMENNLFSGADEGYNSGDPSISYRFVTAAVKGGADKWAIRGANAASGSLSTYYSGARPDYSGYNPMSKEGAIILGIGGDNSNGAQGTFYEGVMTSGYPSDDTENSVQENIVAAKYVVGSLVSGPSFTSGEVVSLRVTTPGYTTRYIAHTDTTVNTQVVDDDSSTTLKEEASWTVVTGLANSQCFSFESVDTPGSYIRHYNFELLLNANDGTKQFHEDATFCPQAALNGEGTSLRSWSYPTRYFRHYENVLYAASNGGVQTFDSKTSFNNDVSFEIETAFAS.

The first 17 residues, 1-17 (MFSRRNLLALGLAATVS), serve as a signal peptide directing secretion. The segment at 18–335 (AGPCDIYEAG…ENIVAAKYVV (318 aa)) is catalytic. 3 disulfides stabilise this stretch: C21-C31, C81-C86, and C176-C177. A glycan (N-linked (GlcNAc...) asparagine) is linked at N83. An N-linked (GlcNAc...) asparagine glycan is attached at N202. Position 219 (D219) interacts with substrate. Residue E221 is the Nucleophile of the active site. The substrate site is built by N222, N223, and G296. D297 serves as the catalytic Proton donor. The segment at 336-499 (GSLVSGPSFT…SFEIETAFAS (164 aa)) is ABD. Cysteines 401 and 439 form a disulfide. Substrate contacts are provided by H416, N418, F419, D435, H463, E465, L468, and D488.

This sequence belongs to the glycosyl hydrolase 54 family.

Its subcellular location is the secreted. The catalysed reaction is Hydrolysis of terminal non-reducing alpha-L-arabinofuranoside residues in alpha-L-arabinosides.. It participates in glycan metabolism; L-arabinan degradation. Alpha-L-arabinofuranosidase involved in the degradation of arabinoxylan, a major component of plant hemicellulose. Able to hydrolyze 1,5-, 1,3- and 1,2-alpha-linkages not only in L-arabinofuranosyl oligosaccharides, but also in polysaccharides containing terminal non-reducing L-arabinofuranoses in side chains, like L-arabinan, arabinogalactan and arabinoxylan. The protein is Alpha-L-arabinofuranosidase B (abfB) of Aspergillus kawachii (strain NBRC 4308) (White koji mold).